The primary structure comprises 119 residues: QRPVAGGRGKDAVIVSATNDVNFDGSYRYSFETSDGQRASQEGALKQVSAPGPDGDTLGEAVRGDFSYTDDAGNQFAIQYTADENGYVPQGAHLPTPPPIPEAIQKALAYIASQPQARS.

Gln-1 is subject to Pyrrolidone carboxylic acid. A Chitin-binding type R&amp;R domain is found at 24–98 (DGSYRYSFET…PQGAHLPTPP (75 aa)). Residues 33–55 (TSDGQRASQEGALKQVSAPGPDG) form a disordered region. Thr-96 carries O-linked (HexNAc...) threonine glycosylation.

Component of the abdominal endocuticle. The sequence is that of Endocuticle structural glycoprotein SgAbd-3 from Schistocerca gregaria (Desert locust).